We begin with the raw amino-acid sequence, 384 residues long: N-acetyldiaminopimelate deacetylase (384 aa).

Residue Asp74 is part of the active site. The Proton acceptor role is filled by Glu133.

The protein belongs to the peptidase M20A family. N-acetyldiaminopimelate deacetylase subfamily.

The enzyme catalyses N-acetyl-(2S,6S)-2,6-diaminopimelate + H2O = (2S,6S)-2,6-diaminopimelate + acetate. The protein operates within amino-acid biosynthesis; L-lysine biosynthesis via DAP pathway; LL-2,6-diaminopimelate from (S)-tetrahydrodipicolinate (acetylase route): step 3/3. Functionally, catalyzes the conversion of N-acetyl-diaminopimelate to diaminopimelate and acetate. This is N-acetyldiaminopimelate deacetylase from Lactiplantibacillus plantarum (strain ATCC BAA-793 / NCIMB 8826 / WCFS1) (Lactobacillus plantarum).